Consider the following 130-residue polypeptide: Small ribosomal subunit protein uS11 (130 aa).

Belongs to the universal ribosomal protein uS11 family. Part of the 30S ribosomal subunit. Interacts with proteins S7 and S18. Binds to IF-3.

Located on the platform of the 30S subunit, it bridges several disparate RNA helices of the 16S rRNA. Forms part of the Shine-Dalgarno cleft in the 70S ribosome. This Phytoplasma mali (strain AT) protein is Small ribosomal subunit protein uS11.